The following is a 332-amino-acid chain: Ketol-acid reductoisomerase (NADP(+)) (332 aa).

Residues 2 to 182 form the KARI N-terminal Rossmann domain; the sequence is AKIYHDLEVS…GATRAGVLET (181 aa). Residues 25-28, Arg48, Ser53, and 83-86 each bind NADP(+); these read YGSQ and DTEQ. His108 is a catalytic residue. Gly134 contacts NADP(+). The region spanning 183–328 is the KARI C-terminal knotted domain; the sequence is TFKEETETDL…KVIREMMPWL (146 aa). 4 residues coordinate Mg(2+): Asp191, Glu195, Glu227, and Glu231. Ser252 serves as a coordination point for substrate.

The protein belongs to the ketol-acid reductoisomerase family. Requires Mg(2+) as cofactor.

It carries out the reaction (2R)-2,3-dihydroxy-3-methylbutanoate + NADP(+) = (2S)-2-acetolactate + NADPH + H(+). It catalyses the reaction (2R,3R)-2,3-dihydroxy-3-methylpentanoate + NADP(+) = (S)-2-ethyl-2-hydroxy-3-oxobutanoate + NADPH + H(+). Its pathway is amino-acid biosynthesis; L-isoleucine biosynthesis; L-isoleucine from 2-oxobutanoate: step 2/4. It functions in the pathway amino-acid biosynthesis; L-valine biosynthesis; L-valine from pyruvate: step 2/4. Functionally, involved in the biosynthesis of branched-chain amino acids (BCAA). Catalyzes an alkyl-migration followed by a ketol-acid reduction of (S)-2-acetolactate (S2AL) to yield (R)-2,3-dihydroxy-isovalerate. In the isomerase reaction, S2AL is rearranged via a Mg-dependent methyl migration to produce 3-hydroxy-3-methyl-2-ketobutyrate (HMKB). In the reductase reaction, this 2-ketoacid undergoes a metal-dependent reduction by NADPH to yield (R)-2,3-dihydroxy-isovalerate. The protein is Ketol-acid reductoisomerase (NADP(+)) of Dictyoglomus thermophilum (strain ATCC 35947 / DSM 3960 / H-6-12).